The primary structure comprises 152 residues: Transcriptional regulator MraZ (152 aa).

SpoVT-AbrB domains follow at residues 5 to 52 and 81 to 124; these read ASAI…PLKE and ATEC…SDAE.

The protein belongs to the MraZ family. As to quaternary structure, forms oligomers.

The protein localises to the cytoplasm. It is found in the nucleoid. This chain is Transcriptional regulator MraZ, found in Pasteurella multocida (strain Pm70).